A 262-amino-acid polypeptide reads, in one-letter code: Putative hydro-lyase Sca_2211 (262 aa).

Belongs to the D-glutamate cyclase family.

The sequence is that of Putative hydro-lyase Sca_2211 from Staphylococcus carnosus (strain TM300).